The sequence spans 271 residues: Ribose-phosphate pyrophosphokinase 2 (271 aa).

Residues 34–36 and 82–83 each bind ATP; these read DGE and RQ. Residues His-115 and Asp-150 each contribute to the Mg(2+) site. Lys-173 is a catalytic residue. Residues Arg-175, Asp-199, and 203-207 each bind D-ribose 5-phosphate; that span reads STGGT.

It belongs to the ribose-phosphate pyrophosphokinase family. Class III (archaeal) subfamily. Mg(2+) is required as a cofactor.

It localises to the cytoplasm. The enzyme catalyses D-ribose 5-phosphate + ATP = 5-phospho-alpha-D-ribose 1-diphosphate + AMP + H(+). It participates in metabolic intermediate biosynthesis; 5-phospho-alpha-D-ribose 1-diphosphate biosynthesis; 5-phospho-alpha-D-ribose 1-diphosphate from D-ribose 5-phosphate (route I): step 1/1. In terms of biological role, involved in the biosynthesis of the central metabolite phospho-alpha-D-ribosyl-1-pyrophosphate (PRPP) via the transfer of pyrophosphoryl group from ATP to 1-hydroxyl of ribose-5-phosphate (Rib-5-P). In Archaeoglobus fulgidus (strain ATCC 49558 / DSM 4304 / JCM 9628 / NBRC 100126 / VC-16), this protein is Ribose-phosphate pyrophosphokinase 2.